The following is a 242-amino-acid chain: Probable transcriptional regulatory protein NMB1648 (242 aa).

The protein belongs to the TACO1 family.

It is found in the cytoplasm. This chain is Probable transcriptional regulatory protein NMB1648, found in Neisseria meningitidis serogroup B (strain ATCC BAA-335 / MC58).